Consider the following 24-residue polypeptide: Outer membrane protein (24 aa).

The protein belongs to the Gram-negative porin family. As to quaternary structure, homotrimer.

The protein resides in the cell outer membrane. Forms pores that allow passive diffusion of small molecules across the outer membrane. The polypeptide is Outer membrane protein (Sodalis glossinidius).